Consider the following 669-residue polypeptide: Translation factor GUF1, mitochondrial (669 aa).

The transit peptide at 1-49 (MWTLVGRGWGCARALAPRATGAALLVAPGPRSAPTLGAAPESWATDRLY) directs the protein to the mitochondrion. The region spanning 66-247 (ENIRNFSIVA…AIIERIPPPK (182 aa)) is the tr-type G domain. GTP contacts are provided by residues 75 to 82 (AHVDHGKS), 140 to 144 (DTPGH), and 194 to 197 (NKID).

It belongs to the TRAFAC class translation factor GTPase superfamily. Classic translation factor GTPase family. LepA subfamily.

The protein localises to the mitochondrion inner membrane. The enzyme catalyses GTP + H2O = GDP + phosphate + H(+). Promotes mitochondrial protein synthesis. May act as a fidelity factor of the translation reaction, by catalyzing a one-codon backward translocation of tRNAs on improperly translocated ribosomes. Binds to mitochondrial ribosomes in a GTP-dependent manner. The polypeptide is Translation factor GUF1, mitochondrial (Homo sapiens (Human)).